Reading from the N-terminus, the 373-residue chain is Protodeoxyviolaceinate monooxygenase (373 aa).

2–20 (KILVIGAGPAGLVFASQLK) lines the FAD pocket.

FAD is required as a cofactor.

It catalyses the reaction protodeoxyviolaceinate + NADH + O2 + H(+) = protoviolaceinate + NAD(+) + H2O. It carries out the reaction protodeoxyviolaceinate + NADPH + O2 + H(+) = protoviolaceinate + NADP(+) + H2O. The protein operates within pigment biosynthesis; violacein biosynthesis. Its function is as follows. Catalyzes the oxygenation of the 6-position of protodeoxyviolaceinate to form proviolacein. This chain is Protodeoxyviolaceinate monooxygenase (vioD), found in Chromobacterium violaceum (strain ATCC 12472 / DSM 30191 / JCM 1249 / CCUG 213 / NBRC 12614 / NCIMB 9131 / NCTC 9757 / MK).